The chain runs to 191 residues: Fe/S biogenesis protein NfuA (191 aa).

Residues C149 and C152 each contribute to the [4Fe-4S] cluster site.

Belongs to the NfuA family. As to quaternary structure, homodimer. [4Fe-4S] cluster is required as a cofactor.

Involved in iron-sulfur cluster biogenesis. Binds a 4Fe-4S cluster, can transfer this cluster to apoproteins, and thereby intervenes in the maturation of Fe/S proteins. Could also act as a scaffold/chaperone for damaged Fe/S proteins. This Cronobacter sakazakii (strain ATCC BAA-894) (Enterobacter sakazakii) protein is Fe/S biogenesis protein NfuA.